The following is a 465-amino-acid chain: GTPase Der (465 aa).

EngA-type G domains follow at residues 3–167 (PLVA…PEEG) and 179–352 (IRIA…ESAN). Residues 9 to 16 (GRPNVGKS), 57 to 61 (DTGGI), 119 to 122 (NKID), 185 to 192 (GRPNVGKS), 232 to 236 (DTAGL), and 297 to 300 (NKWD) each bind GTP. A KH-like domain is found at 353-437 (KTFTTSEVNK…PVSFIFREGT (85 aa)).

Belongs to the TRAFAC class TrmE-Era-EngA-EngB-Septin-like GTPase superfamily. EngA (Der) GTPase family. In terms of assembly, associates with the 50S ribosomal subunit.

Its function is as follows. GTPase that plays an essential role in the late steps of ribosome biogenesis. The sequence is that of GTPase Der from Stenotrophomonas maltophilia (strain R551-3).